The chain runs to 67 residues: MNVTVMFLVLLLLTMPLTDGFNIRATNGGELFGPVQRDAGNVLDHGFQRRRECPPRCPTSHCNAGTC.

An N-terminal signal peptide occupies residues 1-20; that stretch reads MNVTVMFLVLLLLTMPLTDG. Residues 21–48 constitute a propeptide that is removed on maturation; sequence FNIRATNGGELFGPVQRDAGNVLDHGFQ.

Belongs to the conotoxin L superfamily. Post-translationally, contains 2 disulfide bonds. In terms of tissue distribution, expressed by the venom duct.

The protein localises to the secreted. Functionally, increases calcium current amplitude through Cav1.2/Cav1.3 channels in rat pancreatic beta-cells, which is a prerequisite for eliciting insulin secretion. Stimulates insulin secretion in NIT-1 insulinoma cell lines. In vivo, significantly decreases mice blood glucose levels as of 45 minutes after treatment, similarly to insulin treatment. Has a potential therapeutic use in endocrinal pathologies such as early stages of type 2 diabetes where the pancreas's capability to produce insulin is still effective. This Californiconus californicus (California cone) protein is Conotoxin Cl14.2b.